Reading from the N-terminus, the 233-residue chain is Biosynthetic peptidoglycan transglycosylase (233 aa).

A helical transmembrane segment spans residues 8-28; it reads LIALPVGIFIFFNAYVYGNII.

The protein belongs to the glycosyltransferase 51 family.

Its subcellular location is the cell inner membrane. It carries out the reaction [GlcNAc-(1-&gt;4)-Mur2Ac(oyl-L-Ala-gamma-D-Glu-L-Lys-D-Ala-D-Ala)](n)-di-trans,octa-cis-undecaprenyl diphosphate + beta-D-GlcNAc-(1-&gt;4)-Mur2Ac(oyl-L-Ala-gamma-D-Glu-L-Lys-D-Ala-D-Ala)-di-trans,octa-cis-undecaprenyl diphosphate = [GlcNAc-(1-&gt;4)-Mur2Ac(oyl-L-Ala-gamma-D-Glu-L-Lys-D-Ala-D-Ala)](n+1)-di-trans,octa-cis-undecaprenyl diphosphate + di-trans,octa-cis-undecaprenyl diphosphate + H(+). It participates in cell wall biogenesis; peptidoglycan biosynthesis. Its function is as follows. Peptidoglycan polymerase that catalyzes glycan chain elongation from lipid-linked precursors. This chain is Biosynthetic peptidoglycan transglycosylase, found in Neisseria meningitidis serogroup A / serotype 4A (strain DSM 15465 / Z2491).